The chain runs to 197 residues: Probable nicotinate-nucleotide adenylyltransferase (197 aa).

Belongs to the NadD family.

The enzyme catalyses nicotinate beta-D-ribonucleotide + ATP + H(+) = deamido-NAD(+) + diphosphate. It participates in cofactor biosynthesis; NAD(+) biosynthesis; deamido-NAD(+) from nicotinate D-ribonucleotide: step 1/1. Its function is as follows. Catalyzes the reversible adenylation of nicotinate mononucleotide (NaMN) to nicotinic acid adenine dinucleotide (NaAD). The polypeptide is Probable nicotinate-nucleotide adenylyltransferase (Porphyromonas gingivalis (strain ATCC 33277 / DSM 20709 / CIP 103683 / JCM 12257 / NCTC 11834 / 2561)).